The chain runs to 985 residues: Regulator of telomere elongation helicase 1 homolog (985 aa).

In terms of domain architecture, Helicase ATP-binding spans 7-303; the sequence is AGIPVHFPFE…QDMAGDEPKD (297 aa). 42 to 49 contacts ATP; the sequence is SPTGTGKT. [4Fe-4S] cluster-binding residues include C146, C164, C173, and C209. The DEAH box signature appears at 252-255; it reads DEAH. The tract at residues 863–883 is disordered; that stretch reads VKIHKRERSSPTAPESSSQVT. A compositionally biased stretch (polar residues) spans 872–882; that stretch reads SPTAPESSSQV. T874 carries the post-translational modification Phosphothreonine.

Belongs to the helicase family. RAD3/XPD subfamily. In terms of tissue distribution, expressed in both male germline and somatic cells (at protein level). Expressed in ovarian germline stem cells (at protein level). Expressed in adult testes (at protein level). Expressed in the germarium including germline stem cells.

It localises to the nucleus. The protein localises to the chromosome. It carries out the reaction ATP + H2O = ADP + phosphate + H(+). Its function is as follows. A probable ATP-dependent DNA helicase implicated in DNA repair and the maintenance of genomic stability. Acts as an anti-recombinase to counteract toxic recombination and limit crossover during meiosis. Regulates meiotic recombination and crossover homeostasis by physically dissociating strand invasion events and thereby promotes noncrossover repair by meiotic synthesis dependent strand annealing (SDSA) as well as disassembly of D loop recombination intermediates. In male germline stem cells (GSCs), plays a role in GSCs maintenance during larval germline development by modulating the expression of genes such as Stat92E and preventing DNA damage-induced checkpoint activation. May play a role in female germline stem cell maintenance. This Drosophila melanogaster (Fruit fly) protein is Regulator of telomere elongation helicase 1 homolog.